A 450-amino-acid polypeptide reads, in one-letter code: Exodeoxyribonuclease 7 large subunit (450 aa).

The protein belongs to the XseA family. Heterooligomer composed of large and small subunits.

Its subcellular location is the cytoplasm. The catalysed reaction is Exonucleolytic cleavage in either 5'- to 3'- or 3'- to 5'-direction to yield nucleoside 5'-phosphates.. Its function is as follows. Bidirectionally degrades single-stranded DNA into large acid-insoluble oligonucleotides, which are then degraded further into small acid-soluble oligonucleotides. In Listeria welshimeri serovar 6b (strain ATCC 35897 / DSM 20650 / CCUG 15529 / CIP 8149 / NCTC 11857 / SLCC 5334 / V8), this protein is Exodeoxyribonuclease 7 large subunit.